The chain runs to 662 residues: Probable protein phosphatase 2C 4 (662 aa).

The residue at position 153 (serine 153) is a Phosphoserine. One can recognise a PPM-type phosphatase domain in the interval 249 to 653; that stretch reads DVSLENQNLQ…DDVSIVVISL (405 aa). Mn(2+) contacts are provided by aspartate 286, glycine 287, aspartate 581, and aspartate 644.

The protein belongs to the PP2C family. Mg(2+) serves as cofactor. Mn(2+) is required as a cofactor. As to expression, expressed in seedlings, roots, leaves, stems, young inflorescences, flowers and siliques.

The protein localises to the nucleus. It catalyses the reaction O-phospho-L-seryl-[protein] + H2O = L-seryl-[protein] + phosphate. The enzyme catalyses O-phospho-L-threonyl-[protein] + H2O = L-threonyl-[protein] + phosphate. Functionally, involved in leaf development regulation. The protein is Probable protein phosphatase 2C 4 (PLL5) of Arabidopsis thaliana (Mouse-ear cress).